We begin with the raw amino-acid sequence, 458 residues long: Cysteine--tRNA ligase (458 aa).

Cys-27 contributes to the Zn(2+) binding site. Positions 29–39 match the 'HIGH' region motif; the sequence is ITPQSEPHIGH. The Zn(2+) site is built by Cys-207, His-232, and Glu-236. The 'KMSKS' region motif lies at 265-269; sequence KMSKS. ATP is bound at residue Lys-268.

It belongs to the class-I aminoacyl-tRNA synthetase family. In terms of assembly, monomer. Zn(2+) is required as a cofactor.

It localises to the cytoplasm. It carries out the reaction tRNA(Cys) + L-cysteine + ATP = L-cysteinyl-tRNA(Cys) + AMP + diphosphate. This Dehalococcoides mccartyi (strain ATCC BAA-2266 / KCTC 15142 / 195) (Dehalococcoides ethenogenes (strain 195)) protein is Cysteine--tRNA ligase.